Consider the following 123-residue polypeptide: Ribosome-binding factor A (123 aa).

The protein belongs to the RbfA family. Monomer. Binds 30S ribosomal subunits, but not 50S ribosomal subunits or 70S ribosomes.

Its subcellular location is the cytoplasm. Functionally, one of several proteins that assist in the late maturation steps of the functional core of the 30S ribosomal subunit. Associates with free 30S ribosomal subunits (but not with 30S subunits that are part of 70S ribosomes or polysomes). Required for efficient processing of 16S rRNA. May interact with the 5'-terminal helix region of 16S rRNA. This chain is Ribosome-binding factor A, found in Neisseria meningitidis serogroup B (strain ATCC BAA-335 / MC58).